Reading from the N-terminus, the 132-residue chain is MKAEGGDHSMINLSVQQVLSLWAHGTVLRNLTEMWYWIFLWALFSSLFVHGAAGVLMFVMLQRHRQGRVISVIAVSIGFLASVTGAMITSAAVAGIYRVAGKNMAPLEALVWGVGQTVLTLIISFSRILATL.

Residues Met-1–Trp-37 lie on the Extracellular side of the membrane. Asn-12 is a glycosylation site (N-linked (GlcNAc...) asparagine). Residues Ile-38–Phe-58 traverse the membrane as a helical segment. Topologically, residues Val-59–Arg-68 are cytoplasmic. The chain crosses the membrane as a helical span at residues Val-69–Thr-89. Over Ser-90–Met-104 the chain is Extracellular. Residues Ala-105–Phe-125 form a helical membrane-spanning segment. Residues Ser-126 to Leu-132 lie on the Cytoplasmic side of the membrane.

This sequence belongs to the TMEM170 family. Interacts with CTNNB1. As to expression, expressed in normal breast tissues. Down-regulated in breast cancer cells (at protein level).

The protein localises to the cell membrane. Its function is as follows. Negatively regulates the canonical Wnt signaling in breast cancer cells. Exerts an inhibitory effect on breast cancer growth by inhibiting CTNNB1 stabilization and nucleus translocation, which reduces the activity of Wnt targets. This chain is Transmembrane protein 170B (TMEM170B), found in Homo sapiens (Human).